Here is a 166-residue protein sequence, read N- to C-terminus: ATP synthase subunit b (166 aa).

A helical membrane pass occupies residues 8-28; it reads FSFGLFFWQALILVILILLLV.

This sequence belongs to the ATPase B chain family. As to quaternary structure, F-type ATPases have 2 components, F(1) - the catalytic core - and F(0) - the membrane proton channel. F(1) has five subunits: alpha(3), beta(3), gamma(1), delta(1), epsilon(1). F(0) has three main subunits: a(1), b(2) and c(10-14). The alpha and beta chains form an alternating ring which encloses part of the gamma chain. F(1) is attached to F(0) by a central stalk formed by the gamma and epsilon chains, while a peripheral stalk is formed by the delta and b chains.

It is found in the cell inner membrane. Its function is as follows. F(1)F(0) ATP synthase produces ATP from ADP in the presence of a proton or sodium gradient. F-type ATPases consist of two structural domains, F(1) containing the extramembraneous catalytic core and F(0) containing the membrane proton channel, linked together by a central stalk and a peripheral stalk. During catalysis, ATP synthesis in the catalytic domain of F(1) is coupled via a rotary mechanism of the central stalk subunits to proton translocation. Functionally, component of the F(0) channel, it forms part of the peripheral stalk, linking F(1) to F(0). This Flavobacterium johnsoniae (strain ATCC 17061 / DSM 2064 / JCM 8514 / BCRC 14874 / CCUG 350202 / NBRC 14942 / NCIMB 11054 / UW101) (Cytophaga johnsonae) protein is ATP synthase subunit b.